The sequence spans 554 residues: Glucose-6-phosphate isomerase (554 aa).

Residue Glu-359 is the Proton donor of the active site. Catalysis depends on residues His-390 and Lys-518.

The protein belongs to the GPI family.

It is found in the cytoplasm. It carries out the reaction alpha-D-glucose 6-phosphate = beta-D-fructose 6-phosphate. Its pathway is carbohydrate biosynthesis; gluconeogenesis. It participates in carbohydrate degradation; glycolysis; D-glyceraldehyde 3-phosphate and glycerone phosphate from D-glucose: step 2/4. Functionally, catalyzes the reversible isomerization of glucose-6-phosphate to fructose-6-phosphate. The protein is Glucose-6-phosphate isomerase of Pseudomonas putida (strain ATCC 700007 / DSM 6899 / JCM 31910 / BCRC 17059 / LMG 24140 / F1).